A 210-amino-acid polypeptide reads, in one-letter code: Leucyl/phenylalanyl-tRNA--protein transferase (210 aa).

Belongs to the L/F-transferase family.

The protein resides in the cytoplasm. It catalyses the reaction N-terminal L-lysyl-[protein] + L-leucyl-tRNA(Leu) = N-terminal L-leucyl-L-lysyl-[protein] + tRNA(Leu) + H(+). The enzyme catalyses N-terminal L-arginyl-[protein] + L-leucyl-tRNA(Leu) = N-terminal L-leucyl-L-arginyl-[protein] + tRNA(Leu) + H(+). It carries out the reaction L-phenylalanyl-tRNA(Phe) + an N-terminal L-alpha-aminoacyl-[protein] = an N-terminal L-phenylalanyl-L-alpha-aminoacyl-[protein] + tRNA(Phe). Its function is as follows. Functions in the N-end rule pathway of protein degradation where it conjugates Leu, Phe and, less efficiently, Met from aminoacyl-tRNAs to the N-termini of proteins containing an N-terminal arginine or lysine. This chain is Leucyl/phenylalanyl-tRNA--protein transferase, found in Roseobacter denitrificans (strain ATCC 33942 / OCh 114) (Erythrobacter sp. (strain OCh 114)).